The primary structure comprises 923 residues: Periodic tryptophan protein 2 (923 aa).

WD repeat units follow at residues 12 to 52 (GTVY…TFEY), 53 to 93 (EHRK…LHHF), 94 to 132 (NFKE…KDRQ), 144 to 183 (GHFQ…KNLA), and 189 to 228 (GHRD…SDDD). 2 positions are modified to phosphoserine: S225 and S232. WD repeat units lie at residues 258–297 (ANQA…LIQQ), 300–340 (MGQN…YILK), 343–382 (GHFD…CLAT), 385–424 (EHTS…NFRT), 428–470 (TERI…DALS), 471–510 (GHEG…QQVE), 513–552 (EVYS…QVGN), and 575–614 (ERSK…LLKR). A phosphoserine mark is found at S651 and S664. The disordered stretch occupies residues 653–674 (LEDRIDNSLPGSQRGGDLSTRK). The WD 14 repeat unit spans residues 676 to 714 (RPEVRVTSVQFSPTANAFAAASTEGLLIYSTNDTILFDP). Acidic residues-rich tracts occupy residues 869 to 893 (KDDA…DEEG) and 911 to 923 (DSSD…KELP). A disordered region spans residues 869–923 (KDDADEDNEENEENDVVMESDDEEGWIGFNGKDNKLPLSNENDSSDEEENEKELP). Phosphoserine occurs at positions 912 and 913.

The protein belongs to the WD repeat PWP2 family. As to quaternary structure, interacts with snoRNA U3. Interacts with MPP10. Component of the ribosomal small subunit (SSU) processome composed of at least 40 protein subunits and snoRNA U3.

Its subcellular location is the nucleus. The protein resides in the nucleolus. Functionally, required for bud-site selection and cell separation. Also involved in nucleolar processing of pre-18S ribosomal RNA. The polypeptide is Periodic tryptophan protein 2 (PWP2) (Saccharomyces cerevisiae (strain ATCC 204508 / S288c) (Baker's yeast)).